A 249-amino-acid chain; its full sequence is DNA repair protein RecO (249 aa).

This sequence belongs to the RecO family.

Involved in DNA repair and RecF pathway recombination. This is DNA repair protein RecO from Rhodopseudomonas palustris (strain HaA2).